The following is a 189-amino-acid chain: Segregation and condensation protein B (189 aa).

This sequence belongs to the ScpB family. In terms of assembly, homodimer. Homodimerization may be required to stabilize the binding of ScpA to the Smc head domains. Component of a cohesin-like complex composed of ScpA, ScpB and the Smc homodimer, in which ScpA and ScpB bind to the head domain of Smc. The presence of the three proteins is required for the association of the complex with DNA.

The protein localises to the cytoplasm. Participates in chromosomal partition during cell division. May act via the formation of a condensin-like complex containing Smc and ScpA that pull DNA away from mid-cell into both cell halves. The polypeptide is Segregation and condensation protein B (Lachnoclostridium phytofermentans (strain ATCC 700394 / DSM 18823 / ISDg) (Clostridium phytofermentans)).